The primary structure comprises 277 residues: Caspase-3 (277 aa).

N-acetylmethionine is present on Met1. 2 consecutive propeptides follow at residues 1-9 and 10-28; these read MENTENSVD and SKSIKSLEPKIIHGSKSVD. The residue at position 11 (Lys11) is an N6-acetyllysine. Ser26 carries the phosphoserine modification. Active-site residues include His121 and Cys163. S-nitrosocysteine; in inhibited form is present on Cys163.

It belongs to the peptidase C14A family. In terms of assembly, heterotetramer that consists of two anti-parallel arranged heterodimers, each one formed by a 17 kDa (p17) and a 12 kDa (p12) subunit. Interacts with BIRC6/bruce. In terms of processing, cleavage by granzyme B, caspase-6, caspase-8 and caspase-10 generates the two active subunits. Additional processing of the propeptides is likely due to the autocatalytic activity of the activated protease. Active heterodimers between the small subunit of caspase-7 protease and the large subunit of caspase-3 also occur and vice versa. S-nitrosylated on its catalytic site cysteine in unstimulated cell lines and denitrosylated upon activation of the Fas apoptotic pathway, associated with an increase in intracellular caspase activity. Fas therefore activates caspase-3 not only by inducing the cleavage of the caspase zymogen to its active subunits, but also by stimulating the denitrosylation of its active site thiol. Post-translationally, ubiquitinated by BIRC6; this activity is inhibited by DIABLO/SMAC.

The protein localises to the cytoplasm. The enzyme catalyses Strict requirement for an Asp residue at positions P1 and P4. It has a preferred cleavage sequence of Asp-Xaa-Xaa-Asp-|- with a hydrophobic amino-acid residue at P2 and a hydrophilic amino-acid residue at P3, although Val or Ala are also accepted at this position.. With respect to regulation, inhibited by BIRC6; following inhibition of BIRC6-caspase binding by DIABLO/SMAC, BIRC6 is subjected to caspase cleavage, leading to an increase in active caspases. In terms of biological role, involved in the activation cascade of caspases responsible for apoptosis execution. At the onset of apoptosis, it proteolytically cleaves poly(ADP-ribose) polymerase PARP1 at a '216-Asp-|-Gly-217' bond. Cleaves and activates sterol regulatory element binding proteins (SREBPs) between the basic helix-loop-helix leucine zipper domain and the membrane attachment domain. Cleaves and activates caspase-6, -7 and -9 (CASP6, CASP7 and CASP9, respectively). Cleaves and inactivates interleukin-18 (IL18). Triggers cell adhesion in sympathetic neurons through RET cleavage. Cleaves IL-1 beta between an Asp and an Ala, releasing the mature cytokine which is involved in a variety of inflammatory processes. Cleaves and inhibits serine/threonine-protein kinase AKT1 in response to oxidative stress. Acts as an inhibitor of type I interferon production during virus-induced apoptosis by mediating cleavage of antiviral proteins CGAS, IRF3 and MAVS, thereby preventing cytokine overproduction. Also involved in pyroptosis by mediating cleavage and activation of gasdermin-E (GSDME). Cleaves XRCC4 and phospholipid scramblase proteins XKR4, XKR8 and XKR9, leading to promote phosphatidylserine exposure on apoptotic cell surface. Cleaves BIRC6 following inhibition of BIRC6-caspase binding by DIABLO/SMAC. This Macaca fascicularis (Crab-eating macaque) protein is Caspase-3 (CASP3).